Consider the following 443-residue polypeptide: Thymidine phosphorylase (443 aa).

Belongs to the thymidine/pyrimidine-nucleoside phosphorylase family. As to quaternary structure, homodimer.

It catalyses the reaction thymidine + phosphate = 2-deoxy-alpha-D-ribose 1-phosphate + thymine. The protein operates within pyrimidine metabolism; dTMP biosynthesis via salvage pathway; dTMP from thymine: step 1/2. Its function is as follows. The enzymes which catalyze the reversible phosphorolysis of pyrimidine nucleosides are involved in the degradation of these compounds and in their utilization as carbon and energy sources, or in the rescue of pyrimidine bases for nucleotide synthesis. This is Thymidine phosphorylase from Shewanella loihica (strain ATCC BAA-1088 / PV-4).